The sequence spans 98 residues: Ribonuclease kappa (98 aa).

The next 2 helical transmembrane spans lie at 13 to 33 (ACGI…GIFF) and 65 to 85 (VSYN…FSFC).

Belongs to the RNase K family. Interacts with the proton translocation complex V0 of the V-ATPase. Interacts with ATP6AP1.

The protein resides in the endomembrane system. It localises to the cytoplasmic vesicle. Its subcellular location is the clathrin-coated vesicle membrane. Endoribonuclease which preferentially cleaves ApU and ApG phosphodiester bonds. Hydrolyzes UpU bonds at a lower rate. Regulates the activity of vacuolar (H+)-ATPase (V-ATPase) which is responsible for acidifying and maintaining the pH of intracellular compartments. Required at an early stage of receptor-mediated endocytosis. The sequence is that of Ribonuclease kappa (Rnasek) from Mus musculus (Mouse).